The chain runs to 618 residues: Glucose starvation modulator protein 1 (618 aa).

Positions C20 to C48 form a DNA-binding region, zn(2)-C6 fungal-type. Residues A325–E352 form a disordered region. Over residues A335–E352 the composition is skewed to basic and acidic residues. The PAS domain maps to L466 to G538.

It belongs to the ERT1/acuK family.

It localises to the nucleus. Transcription factor which regulates nonfermentable carbon utilization. Binds specifically to 5'-CGGN(8)CGG-3' and 5'-CGGN(9)CGG-3' sequences in the promoter region. The polypeptide is Glucose starvation modulator protein 1 (GSM1) (Saccharomyces cerevisiae (strain YJM789) (Baker's yeast)).